Reading from the N-terminus, the 464-residue chain is Lysosomal dipeptide transporter MFSD1 (464 aa).

The short motif at 11 to 12 (LL) is the Dileucine internalization motif element. Ser20 is modified (phosphoserine). Transmembrane regions (helical) follow at residues 38 to 58 (LAHRLVVLSLMCFLGFGSYFC), 82 to 102 (LLYAWYSWPNVVLCFLGGFLI), 112 to 132 (TVIFSCFVCIGQVIFALGGIF), 134 to 154 (AFWLMELGRFVFGIGGESLAV), 190 to 210 (LMGWLYGKIEALLGSAGHMTL), 214 to 234 (LMIGCITCIFSLICALALAYL), 265 to 285 (LILVFVICVCYYVAVFPFIGL), 303 to 323 (AINSIVYIISAPMSPLFGLLV), 330 to 350 (IIWVLYAVAATLVSHMMLAFT), 360 to 380 (LLGFSYSLLACALWPMVAFIV), 391 to 411 (FMQSIQNLGLAVIAILAGMIL), and 417 to 437 (LLLEVFFIACVSLSLLAVVCL).

The protein belongs to the major facilitator superfamily. Homodimer. Interacts with lysosomal protein GLMP (via lumenal domain); the interaction starts while both proteins are still in the endoplasmic reticulum and is required for stabilization of MFSD1 in lysosomes but has no direct effect on its targeting to lysosomes or transporter activity. Not N-glycosylated. As to expression, in brain, expressed in the cortex, striatum hippocampus, hypothalamus, thalamus and brainstem (at protein level). Widely expressed with highest levels in kidney and spleen (at protein level).

Its subcellular location is the lysosome membrane. It carries out the reaction L-alpha-aminoacyl-L-arginine(out) = L-alpha-aminoacyl-L-arginine(in). The enzyme catalyses L-arginyl-L-alpha-amino acid(out) = L-arginyl-L-alpha-amino acid(in). It catalyses the reaction L-arginyl-glycine(out) = L-arginyl-glycine(in). The catalysed reaction is L-alpha-aminoacyl-L-lysine(out) = L-alpha-aminoacyl-L-lysine(in). It carries out the reaction L-aspartyl-L-lysine(out) = L-aspartyl-L-lysine(in). The enzyme catalyses L-alanyl-L-lysine(out) = L-alanyl-L-lysine(in). It catalyses the reaction L-lysyl-L-alpha-amino acid(out) = L-lysyl-L-alpha-amino acid(in). The catalysed reaction is L-lysyl-L-alanine(out) = L-lysyl-L-alanine(in). It carries out the reaction L-lysyl-L-lysine(out) = L-lysyl-L-lysine(in). The enzyme catalyses L-lysyl-glycine(out) = L-lysyl-glycine(in). It catalyses the reaction L-alpha-aminoacyl-L-histidine(out) = L-alpha-aminoacyl-L-histidine(in). The catalysed reaction is L-histidyl-L-alpha-amino acid(out) = L-histidyl-L-alpha-amino acid(in). It carries out the reaction L-histidyl-glycine(out) = L-histidyl-glycine(in). Lysosomal dipeptide uniporter that selectively exports lysine, arginine or histidine-containing dipeptides with a net positive charge from the lysosome lumen into the cytosol. Could play a role in a specific type of protein O-glycosylation indirectly regulating macrophages migration and tissue invasion. Also essential for liver homeostasis. This is Lysosomal dipeptide transporter MFSD1 from Mus musculus (Mouse).